Consider the following 430-residue polypeptide: MANVVVVGAQWGDEGKGKIVDWLSEQADIVARFQGGHNAGHTLVINGETYKLALLPSGVLRPSKLAVIGNGVVFDPQAFLDEVERLTKQGVAISPENLRVAENVTLILPLHRELDALRENASKATAIGTTQRGIGPAYEDKVGRRAIRLMDLADIDTLPHKIERLLTHHNALRRGLGLAEFEAGAILKELTALAPKLLPYAETVWRLLDIKRREGKRILFEGAQGALLDVDHGTYPYVTSSNTVAAQAATGTGMGPGSVGYVLGICKAYTTRVGQGPFPTELDNEIGRKIGERGREFGTNTGRPRRCGWFDAVLVRQTVRTCGIHGLALTKLDILDGFEQIEVCVGYRLDGKEIDHLPAGEGAQARVEPIYETIEGWKEPTANARSWAELPAQAIKYVRRIEELVGCPVALLSTSPEREDTILVQNPFEA.

Residues Gly-12–Lys-18 and Gly-40–Thr-42 each bind GTP. Asp-13 serves as the catalytic Proton acceptor. Residues Asp-13 and Gly-40 each contribute to the Mg(2+) site. IMP-binding positions include Asp-13 to Lys-16, Asn-38 to His-41, Thr-130, Arg-144, Gln-224, Thr-239, and Arg-303. His-41 (proton donor) is an active-site residue. A substrate-binding site is contributed by Thr-299–Arg-305. GTP contacts are provided by residues Arg-305, Lys-331–Asp-333, and Ser-413–Ser-415.

The protein belongs to the adenylosuccinate synthetase family. As to quaternary structure, homodimer. Mg(2+) is required as a cofactor.

It is found in the cytoplasm. The enzyme catalyses IMP + L-aspartate + GTP = N(6)-(1,2-dicarboxyethyl)-AMP + GDP + phosphate + 2 H(+). It functions in the pathway purine metabolism; AMP biosynthesis via de novo pathway; AMP from IMP: step 1/2. Functionally, plays an important role in the de novo pathway of purine nucleotide biosynthesis. Catalyzes the first committed step in the biosynthesis of AMP from IMP. This chain is Adenylosuccinate synthetase, found in Rhodopseudomonas palustris (strain HaA2).